The chain runs to 610 residues: Phosphomethylpyrimidine synthase (610 aa).

Substrate-binding positions include N216, M245, Y274, H310, 330-332, 371-374, and E410; these read SRG and DGLR. H414 contacts Zn(2+). Position 437 (Y437) interacts with substrate. A Zn(2+)-binding site is contributed by H478. [4Fe-4S] cluster is bound by residues C558, C561, and C566.

It belongs to the ThiC family. As to quaternary structure, homodimer. It depends on [4Fe-4S] cluster as a cofactor.

It catalyses the reaction 5-amino-1-(5-phospho-beta-D-ribosyl)imidazole + S-adenosyl-L-methionine = 4-amino-2-methyl-5-(phosphooxymethyl)pyrimidine + CO + 5'-deoxyadenosine + formate + L-methionine + 3 H(+). The protein operates within cofactor biosynthesis; thiamine diphosphate biosynthesis. In terms of biological role, catalyzes the synthesis of the hydroxymethylpyrimidine phosphate (HMP-P) moiety of thiamine from aminoimidazole ribotide (AIR) in a radical S-adenosyl-L-methionine (SAM)-dependent reaction. The sequence is that of Phosphomethylpyrimidine synthase from Allorhizobium ampelinum (strain ATCC BAA-846 / DSM 112012 / S4) (Agrobacterium vitis (strain S4)).